Here is a 358-residue protein sequence, read N- to C-terminus: Peptide chain release factor 1 (358 aa).

The residue at position 233 (Gln-233) is an N5-methylglutamine.

It belongs to the prokaryotic/mitochondrial release factor family. In terms of processing, methylated by PrmC. Methylation increases the termination efficiency of RF1.

The protein localises to the cytoplasm. Peptide chain release factor 1 directs the termination of translation in response to the peptide chain termination codons UAG and UAA. This is Peptide chain release factor 1 from Agathobacter rectalis (strain ATCC 33656 / DSM 3377 / JCM 17463 / KCTC 5835 / VPI 0990) (Eubacterium rectale).